The following is an 81-amino-acid chain: Protein Vpu (81 aa).

Topologically, residues 1–7 (MQSLQIL) are extracellular. Residues 8–28 (AIVSLVVVAIIAIVVWTIVLI) form a helical membrane-spanning segment. Residues 29–81 (EYRKILRQRKIDRLFDRIREKAEDSGNESERDQEELSALVEMGHLAPWDVDDL) are Cytoplasmic-facing. Residues Ser-53 and Ser-57 each carry the phosphoserine; by host CK2 modification.

Belongs to the HIV-1 VPU protein family. In terms of assembly, homopentamer. Interacts with host CD4 and BRTC; these interactions induce proteasomal degradation of CD4. Interacts with host BST2; this interaction leads to the degradation of host BST2. Interacts with host FBXW11. Interacts with host AP1M1; this interaction plays a role in the mistrafficking and subsequent degradation of host BST2. Interacts with host RANBP2; this interaction allows Vpu to down-regulate host BLM sumoylation. Phosphorylated by host CK2. This phosphorylation is necessary for interaction with human BTRC and degradation of CD4.

The protein resides in the host membrane. Its activity is regulated as follows. Ion channel activity is inhibited by hexamethylene amiloride in vitro. Enhances virion budding by targeting host CD4 and Tetherin/BST2 to proteasome degradation. Degradation of CD4 prevents any unwanted premature interactions between viral Env and its host receptor CD4 in the endoplasmic reticulum. Degradation of antiretroviral protein Tetherin/BST2 is important for virion budding, as BST2 tethers new viral particles to the host cell membrane. Mechanistically, Vpu bridges either CD4 or BST2 to BTRC, a substrate recognition subunit of the Skp1/Cullin/F-box protein E3 ubiquitin ligase, induces their ubiquitination and subsequent proteasomal degradation. The alteration of the E3 ligase specificity by Vpu seems to promote the degradation of host IKBKB, leading to NF-kappa-B down-regulation and subsequent apoptosis. Acts as a viroporin that forms an oligomeric ion channel in membranes. Modulates the host DNA repair mechanisms to promote degradation of nuclear viral cDNA in cells that are already productively infected in order to suppress immune sensing and proviral hyper-integration (superinfection). Manipulates PML-NBs and modulates SUMOylation of host BLM protein thereby enhancing its DNA-end processing activity toward viral unintegrated linear DNA. Also inhibits RAD52-mediated homologous repair of viral cDNA, preventing the generation of dead-end circular forms of single copies of the long terminal repeat and permitting sustained nucleolytic attack. The protein is Protein Vpu of Homo sapiens (Human).